Reading from the N-terminus, the 504-residue chain is ATP synthase subunit alpha (504 aa).

171-178 lines the ATP pocket; sequence GDRQTGKT.

This sequence belongs to the ATPase alpha/beta chains family. F-type ATPases have 2 components, CF(1) - the catalytic core - and CF(0) - the membrane proton channel. CF(1) has five subunits: alpha(3), beta(3), gamma(1), delta(1), epsilon(1). CF(0) has three main subunits: a(1), b(2) and c(9-12). The alpha and beta chains form an alternating ring which encloses part of the gamma chain. CF(1) is attached to CF(0) by a central stalk formed by the gamma and epsilon chains, while a peripheral stalk is formed by the delta and b chains.

Its subcellular location is the cell inner membrane. It carries out the reaction ATP + H2O + 4 H(+)(in) = ADP + phosphate + 5 H(+)(out). Produces ATP from ADP in the presence of a proton gradient across the membrane. The alpha chain is a regulatory subunit. This Helicobacter hepaticus (strain ATCC 51449 / 3B1) protein is ATP synthase subunit alpha.